Consider the following 493-residue polypeptide: Chromosomal replication initiator protein DnaA (493 aa).

The interval 1–105 (MSDTIQQEAP…LMYSIVIDKS (105 aa)) is domain I, interacts with DnaA modulators. Residues 105–152 (SQGQPVTIELPHQIDAAPAERSVRPEAPGQKASAERERLEIARPRFES) are domain II. The tract at residues 121–140 (APAERSVRPEAPGQKASAER) is disordered. Residues 153–370 (NLNPKYTFST…GCIVKLLAAH (218 aa)) are domain III, AAA+ region. ATP-binding residues include glycine 198, glycine 200, lysine 201, and threonine 202. The tract at residues 371-493 (SLDNQEIDLQ…LRKRIEIMSM (123 aa)) is domain IV, binds dsDNA.

This sequence belongs to the DnaA family. As to quaternary structure, oligomerizes as a right-handed, spiral filament on DNA at oriC.

It is found in the cytoplasm. In terms of biological role, plays an essential role in the initiation and regulation of chromosomal replication. ATP-DnaA binds to the origin of replication (oriC) to initiate formation of the DNA replication initiation complex once per cell cycle. Binds the DnaA box (a 9 base pair repeat at the origin) and separates the double-stranded (ds)DNA. Forms a right-handed helical filament on oriC DNA; dsDNA binds to the exterior of the filament while single-stranded (ss)DNA is stabiized in the filament's interior. The ATP-DnaA-oriC complex binds and stabilizes one strand of the AT-rich DNA unwinding element (DUE), permitting loading of DNA polymerase. After initiation quickly degrades to an ADP-DnaA complex that is not apt for DNA replication. Binds acidic phospholipids. The polypeptide is Chromosomal replication initiator protein DnaA (Chlorobaculum tepidum (strain ATCC 49652 / DSM 12025 / NBRC 103806 / TLS) (Chlorobium tepidum)).